The primary structure comprises 727 residues: Procollagen-lysine,2-oxoglutarate 5-dioxygenase 1 (727 aa).

The first 18 residues, 1–18 (MRPLLLLALLGWLLLAEA), serve as a signal peptide directing secretion. N-linked (GlcNAc...) asparagine glycosylation is found at asparagine 163, asparagine 197, and asparagine 538. A Fe2OG dioxygenase domain is found at 636–727 (QFDLAFVVRY…RYIAVSFVDP (92 aa)). The Fe cation site is built by histidine 656 and aspartate 658. The N-linked (GlcNAc...) asparagine glycan is linked to asparagine 686. Fe cation is bound at residue histidine 708. Arginine 718 is a catalytic residue.

As to quaternary structure, homodimer. Identified in a complex with P3H3 and P3H4. It depends on Fe(2+) as a cofactor. L-ascorbate serves as cofactor.

The protein localises to the rough endoplasmic reticulum membrane. It catalyses the reaction L-lysyl-[collagen] + 2-oxoglutarate + O2 = (5R)-5-hydroxy-L-lysyl-[collagen] + succinate + CO2. In terms of biological role, part of a complex composed of PLOD1, P3H3 and P3H4 that catalyzes hydroxylation of lysine residues in collagen alpha chains and is required for normal assembly and cross-linkling of collagen fibrils. Forms hydroxylysine residues in -Xaa-Lys-Gly- sequences in collagens. These hydroxylysines serve as sites of attachment for carbohydrate units and are essential for the stability of the intermolecular collagen cross-links. The polypeptide is Procollagen-lysine,2-oxoglutarate 5-dioxygenase 1 (PLOD1) (Homo sapiens (Human)).